A 570-amino-acid chain; its full sequence is Serine/threonine-protein kinase Pink1, mitochondrial (570 aa).

Residues 1-5 (MSVRA) constitute a mitochondrion transit peptide. Residues 6–96 (VGSRLFKHGR…AELRKKATRR (91 aa)) lie on the Mitochondrial intermembrane side of the membrane. A helical membrane pass occupies residues 97–120 (ILFGDSAPFFALVGVSIASGTGIL). Residues 121 to 570 (TKEEELEGVC…WIQENLPELD (450 aa)) lie on the Cytoplasmic side of the membrane. The region spanning 162–484 (LSLGKPIAKG…VAANVCQLFL (323 aa)) is the Protein kinase domain. Lys196 contributes to the ATP binding site. Ser205 is subject to Phosphoserine; by autocatalysis. Glu217 serves as a coordination point for Mg(2+). Residues Lys295, Tyr297, and Asn300 each coordinate ATP. The active-site Proton acceptor is the Asp337. Position 341 (Asp341) interacts with ATP. Residues Asn342 and Asp359 each contribute to the Mg(2+) site. Asp359 lines the ATP pocket. Ser377 is subject to Phosphoserine; by autocatalysis. Thr386 carries the phosphothreonine; by autocatalysis modification. At Thr530 the chain carries Phosphothreonine.

Belongs to the protein kinase superfamily. Ser/Thr protein kinase family. Requires Mg(2+) as cofactor. In terms of processing, proteolytically cleaved. In healthy cells, the precursor is continuously imported into mitochondria where it is proteolytically cleaved into its short form by the mitochondrial rhomboid protease rho-7 (TcasGA2_TC013516). The short form is then released into the cytosol where it rapidly undergoes proteasome-dependent degradation. In unhealthy cells, when cellular stress conditions lead to the loss of mitochondrial membrane potential, mitochondrial import is impaired leading to the precursor accumulating on the outer mitochondrial membrane (OMM). Post-translationally, autophosphorylated on Ser-205, which activates kinase activity and is required for substrate recognition. Loss of mitochondrial membrane potential results in the precursor accumulating on the outer mitochondrial membrane (OMM) where it is activated by autophosphorylation at Ser-205. Autophosphorylation is sufficient and essential for selective recruitment of park to depolarized mitochondria, likely via Pink1-dependent phosphorylation of polyubiquitin chains. Also autophosphorylated at Ser-377, Thr-386 and possibly Thr-530. Another report found evidence of autophosphorylation at Ser-154, Thr-186, Thr-218, Ser-267 and Thr-530, as well as a number of other minor sites, but determined that phosphorylation at these sites is not required for enzyme activity and may not occur in vivo.

It localises to the mitochondrion outer membrane. It is found in the mitochondrion inner membrane. Its subcellular location is the cytoplasm. The protein localises to the cytosol. It catalyses the reaction L-seryl-[protein] + ATP = O-phospho-L-seryl-[protein] + ADP + H(+). The enzyme catalyses L-threonyl-[protein] + ATP = O-phospho-L-threonyl-[protein] + ADP + H(+). In terms of biological role, acts as a serine/threonine-protein kinase. Exhibits a substrate preference for proline at position P+1 and a general preference at several residues for basic residues such as arginine. Also exhibits moderate preferences for a phosphotyrosine at position P-3 and a tryptophan at P-5. Critical to mitochondrial homeostasis it mediates several pathways that maintain mitochondrial health and function. Protects against mitochondrial dysfunction during cellular stress by phosphorylating mitochondrial proteins such as park and likely Drp1, to coordinate mitochondrial quality control mechanisms that remove and replace dysfunctional mitochondrial components. Depending on the severity of mitochondrial damage and/or dysfunction, activity ranges from preventing apoptosis and stimulating mitochondrial biogenesis to regulating mitochondrial dynamics and eliminating severely damaged mitochondria via mitophagy. Appears to be particularly important in maintaining the physiology and function of cells with high energy demands that are undergoing stress or altered metabolic environment, including spermatids, muscle cells and neurons such as the dopaminergic (DA) neurons. Mediates the translocation and activation of park at the outer membrane (OMM) of dysfunctional/depolarized mitochondria. At the OMM of damaged mitochondria, phosphorylates pre-existing polyubiquitin chains, the Pink1-phosphorylated polyubiquitin then recruits park from the cytosol to the OMM where park is fully activated by phosphorylation at 'Ser-80' by Pink1. When cellular stress results in irreversible mitochondrial damage, functions with park to promote the clearance of dysfunctional and/or depolarized mitochondria by selective autophagy (mitophagy). The Pink1-park pathway also promotes fission and/or inhibits fusion of damaged mitochondria, by phosphorylating and thus promoting the park-dependent degradation of proteins involved in mitochondrial fusion/fission such as Marf, Opa1 and fzo. This prevents the refusion of unhealthy mitochondria with the mitochondrial network or initiates mitochondrial fragmentation facilitating their later engulfment by autophagosomes. Also likely to promote mitochondrial fission independently of park and Atg7-mediated mitophagy, via the phosphorylation and activation of Drp1. Regulates motility of damaged mitochondria by phosphorylating Miro which likely promotes its park-dependent degradation by the proteasome; in motor neurons, this inhibits mitochondrial intracellular anterograde transport along the axons which probably increases the chance of the mitochondria being eliminated in the soma. The Pink1-park pathway is also involved in mitochondrial regeneration processes such as promoting mitochondrial biogenesis, activating localized mitochondrial repair, promoting selective turnover of mitochondrial proteins and initiating the mitochondrial import of endogenous proteins. Involved in mitochondrial biogenesis by promoting the park-dependent ubiquitination of transcriptional repressor Paris which leads to its subsequent proteasomal degradation and allows activation of the transcription factor srl. Functions with park to promote localized mitochondrial repair by activating the translation of specific nuclear-encoded mitochondrial RNAs (nc-mtRNAs) on the mitochondrial surface, including several key electron transport chain component nc-mtRNAs. During oogenesis, phosphorylates and inactivates larp on the membrane of defective mitochondria, thus impairing local translation and mtDNA replication and consequently, reducing transmission of deleterious mtDNA mutations to the mature oocyte. Phosphorylates the mitochondrial acyl-CoA dehydrogenase Mcad, and appears to be important for maintaining fatty acid and amino acid metabolism via a mechanism that is independent of it's role in maintaining production of ATP. This chain is Serine/threonine-protein kinase Pink1, mitochondrial, found in Tribolium castaneum (Red flour beetle).